Here is a 300-residue protein sequence, read N- to C-terminus: NAD kinase (300 aa).

The active-site Proton acceptor is the D75. NAD(+) is bound by residues 75–76, 149–150, R177, D179, 190–195, A214, and Q248; these read DG, ND, and TAYALS.

Belongs to the NAD kinase family. Requires a divalent metal cation as cofactor.

Its subcellular location is the cytoplasm. The enzyme catalyses NAD(+) + ATP = ADP + NADP(+) + H(+). In terms of biological role, involved in the regulation of the intracellular balance of NAD and NADP, and is a key enzyme in the biosynthesis of NADP. Catalyzes specifically the phosphorylation on 2'-hydroxyl of the adenosine moiety of NAD to yield NADP. This is NAD kinase from Burkholderia multivorans (strain ATCC 17616 / 249).